Consider the following 258-residue polypeptide: 4-hydroxy-tetrahydrodipicolinate reductase (258 aa).

Residue 10 to 15 (GCLGRM) coordinates NAD(+). NADP(+) is bound at residue Lys-38. NAD(+)-binding positions include 89 to 91 (GTT) and 113 to 116 (AGNM). The active-site Proton donor/acceptor is His-146. His-147 contributes to the (S)-2,3,4,5-tetrahydrodipicolinate binding site. Residue Lys-150 is the Proton donor of the active site. Residue 156–157 (GT) coordinates (S)-2,3,4,5-tetrahydrodipicolinate.

Belongs to the DapB family.

The protein localises to the cytoplasm. It catalyses the reaction (S)-2,3,4,5-tetrahydrodipicolinate + NAD(+) + H2O = (2S,4S)-4-hydroxy-2,3,4,5-tetrahydrodipicolinate + NADH + H(+). The enzyme catalyses (S)-2,3,4,5-tetrahydrodipicolinate + NADP(+) + H2O = (2S,4S)-4-hydroxy-2,3,4,5-tetrahydrodipicolinate + NADPH + H(+). It participates in amino-acid biosynthesis; L-lysine biosynthesis via DAP pathway; (S)-tetrahydrodipicolinate from L-aspartate: step 4/4. Functionally, catalyzes the conversion of 4-hydroxy-tetrahydrodipicolinate (HTPA) to tetrahydrodipicolinate. The chain is 4-hydroxy-tetrahydrodipicolinate reductase from Pelagibacter ubique (strain HTCC1062).